A 285-amino-acid chain; its full sequence is uncharacterized protein (285 aa).

One can recognise an ATP-grasp domain in the interval 107–285 (FLTVDTTIFD…KHHLKRQMIP (179 aa)).

This is an uncharacterized protein from Mycoplasma pneumoniae (strain ATCC 29342 / M129 / Subtype 1) (Mycoplasmoides pneumoniae).